Reading from the N-terminus, the 185-residue chain is MIQDILKEAQDHMQKAIEVLKKEFATMRVGRATPALLEKVVVEYYGTQMPVNQLATISAPEPRLLVIQPWDKGALGAIEKAILKSDLGITPTNDGSVIRLAIPPLTQERRQELVKVARKKAEEARVAIRNIRRDANDRIKDLEKDKVISEDEGKRGQDEVQKLTDKFIKTVDELLKAKEDEILSI.

Belongs to the RRF family.

The protein resides in the cytoplasm. Responsible for the release of ribosomes from messenger RNA at the termination of protein biosynthesis. May increase the efficiency of translation by recycling ribosomes from one round of translation to another. This Carboxydothermus hydrogenoformans (strain ATCC BAA-161 / DSM 6008 / Z-2901) protein is Ribosome-recycling factor.